The sequence spans 706 residues: Kinesin-like protein KIF2A (706 aa).

A globular region spans residues 1–217; that stretch reads MATANFGKIQ…LDYRPLTTAD (217 aa). The disordered stretch occupies residues 66 to 139; it reads LVPDEEIEPS…AQQNGSVSDI (74 aa). At S75 the chain carries Phosphoserine. Phosphothreonine occurs at positions 78 and 97. Phosphoserine is present on S100. K102 is modified (N6-acetyllysine). Residues 123–139 are compositionally biased toward polar residues; it reads FPEQSSSAQQNGSVSDI. 2 positions are modified to phosphoserine: S135 and S140. A disordered region spans residues 165–186; the sequence is KLQEKREKRRLQQQELREKRAQ. Residues 223-553 form the Kinesin motor domain; that stretch reads RICVCVRKRP…LRYANRVKEL (331 aa). 313–320 contributes to the ATP binding site; sequence GQTGSGKT. A phosphoserine mark is found at D556 and Q573. Positions 660–699 form a coiled coil; the sequence is ATQLEAILEQKIDILTELRDKVKSFRAALQEEEQASKQIN.

Belongs to the TRAFAC class myosin-kinesin ATPase superfamily. Kinesin family. MCAK/KIF2 subfamily. In terms of assembly, interacts with AURKA and PLK1. Interacts with PSRC1. Interacts with MCRS1; the interaction enhances recruitment of KIF2A to the minus ends of spindle microtubules which promotes chromosome alignment.

It localises to the cytoplasm. Its subcellular location is the cytoskeleton. The protein localises to the microtubule organizing center. It is found in the centrosome. The protein resides in the spindle pole. It localises to the spindle. Functionally, plus end-directed microtubule-dependent motor required for normal brain development. May regulate microtubule dynamics during axonal growth. Required for normal progression through mitosis. Required for normal congress of chromosomes at the metaphase plate. Required for normal spindle dynamics during mitosis. Promotes spindle turnover. Implicated in formation of bipolar mitotic spindles. Has microtubule depolymerization activity. This chain is Kinesin-like protein KIF2A (KIF2A), found in Homo sapiens (Human).